Reading from the N-terminus, the 576-residue chain is DNA mismatch repair protein MutL (576 aa).

The protein belongs to the DNA mismatch repair MutL/HexB family.

This protein is involved in the repair of mismatches in DNA. It is required for dam-dependent methyl-directed DNA mismatch repair. May act as a 'molecular matchmaker', a protein that promotes the formation of a stable complex between two or more DNA-binding proteins in an ATP-dependent manner without itself being part of a final effector complex. The chain is DNA mismatch repair protein MutL from Chlamydia trachomatis serovar A (strain ATCC VR-571B / DSM 19440 / HAR-13).